The following is a 139-amino-acid chain: Oocyte zinc finger protein XlCOF14 (139 aa).

5 C2H2-type zinc fingers span residues 6 to 28, 33 to 55, 61 to 83, 89 to 111, and 117 to 139; these read FICS…SNVH, FPCT…QKIH, HKCT…HLSH, FSCF…QLSH, and FVCS…CHIH.

It belongs to the krueppel C2H2-type zinc-finger protein family.

It is found in the nucleus. In terms of biological role, may be involved in transcriptional regulation. The polypeptide is Oocyte zinc finger protein XlCOF14 (Xenopus laevis (African clawed frog)).